We begin with the raw amino-acid sequence, 100 residues long: NADH-quinone oxidoreductase subunit K 1 (100 aa).

3 consecutive transmembrane segments (helical) span residues 4–24 (LNNYLIISAILFSIGTIGVLV), 29–49 (IVIFMCVEMMLNAVNLTFIAF), and 60–80 (IFVFFVMTVAAAEAAVGLALM).

The protein belongs to the complex I subunit 4L family. In terms of assembly, NDH-1 is composed of 14 different subunits. Subunits NuoA, H, J, K, L, M, N constitute the membrane sector of the complex.

It localises to the cell inner membrane. It carries out the reaction a quinone + NADH + 5 H(+)(in) = a quinol + NAD(+) + 4 H(+)(out). Functionally, NDH-1 shuttles electrons from NADH, via FMN and iron-sulfur (Fe-S) centers, to quinones in the respiratory chain. The immediate electron acceptor for the enzyme in this species is believed to be ubiquinone. Couples the redox reaction to proton translocation (for every two electrons transferred, four hydrogen ions are translocated across the cytoplasmic membrane), and thus conserves the redox energy in a proton gradient. The polypeptide is NADH-quinone oxidoreductase subunit K 1 (Geotalea daltonii (strain DSM 22248 / JCM 15807 / FRC-32) (Geobacter daltonii)).